The chain runs to 268 residues: Undecaprenyl-diphosphatase (268 aa).

The next 8 membrane-spanning stretches (helical) occupy residues 1 to 21, 39 to 59, 85 to 105, 110 to 130, 144 to 164, 187 to 207, 221 to 241, and 247 to 267; these read MSLIYLVVLALVQGITEFLPI, QGPLIDVMAHAGSLLAVLVYF, ALLVAASMPPIIIVAGALVAF, ALRSPRVIAIATLAFALPLWL, MSFKHAALIGIAQLFALIPGA, FSMLMAIPVIAAFGLVSLIEL, DGLIVAGLSFVTAWAAIAVLM, and IGFLPFALYRVGLGLALLVFF.

Belongs to the UppP family.

The protein resides in the cell inner membrane. It carries out the reaction di-trans,octa-cis-undecaprenyl diphosphate + H2O = di-trans,octa-cis-undecaprenyl phosphate + phosphate + H(+). Functionally, catalyzes the dephosphorylation of undecaprenyl diphosphate (UPP). Confers resistance to bacitracin. The sequence is that of Undecaprenyl-diphosphatase from Maricaulis maris (strain MCS10) (Caulobacter maris).